The primary structure comprises 170 residues: Protein-export protein SecB (170 aa).

The protein belongs to the SecB family. As to quaternary structure, homotetramer, a dimer of dimers. One homotetramer interacts with 1 SecA dimer.

It is found in the cytoplasm. Its function is as follows. One of the proteins required for the normal export of preproteins out of the cell cytoplasm. It is a molecular chaperone that binds to a subset of precursor proteins, maintaining them in a translocation-competent state. It also specifically binds to its receptor SecA. This chain is Protein-export protein SecB, found in Xanthomonas axonopodis pv. citri (strain 306).